The primary structure comprises 184 residues: Luciferin-binding protein (184 aa).

EF-hand domains are found at residues 10 to 45 (YHLR…IAKI), 46 to 81 (AKLS…EEAA), 98 to 133 (MAVI…VGPD), and 134 to 169 (ITDD…FLFG). Ca(2+) contacts are provided by Asp-111, Asp-113, Asp-115, Tyr-117, Glu-122, Asp-147, Asn-149, Asn-151, Gln-153, and Glu-158.

Its function is as follows. This Ca(2+)-dependent protein binds to luciferin. The luciferin of LBP is capable of reacting with luciferase and O(2) only when calcium is bound. This is Luciferin-binding protein from Renilla reniformis (Sea pansy).